We begin with the raw amino-acid sequence, 613 residues long: 9-cis-epoxycarotenoid dioxygenase NCED5, chloroplastic (613 aa).

The segment covering 1–15 has biased composition (polar residues); it reads MPTTFTPNSPASSCS. A chloroplast-targeting transit peptide spans 1–36; sequence MPTTFTPNSPASSCSIHHRASPSRGARNSVRFTRPR. Residues 1–62 are disordered; the sequence is MPTTFTPNSP…PPAYVPPPPP (62 aa). Residues 37–50 show a composition bias toward low complexity; the sequence is AAAAATNSVLSAPS. Over residues 51-62 the composition is skewed to pro residues; the sequence is SVPPAYVPPPPP. Positions 305, 354, 419, and 600 each coordinate Fe cation.

This sequence belongs to the carotenoid oxygenase family. Fe(2+) serves as cofactor.

It localises to the plastid. The protein resides in the chloroplast. The enzyme catalyses a 9-cis-epoxycarotenoid + O2 = a 12'-apo-carotenal + 2-cis,4-trans-xanthoxin. The catalysed reaction is 9-cis-violaxanthin + O2 = (3S,5R,6S)-5,6-epoxy-3-hydroxy-5,6-dihydro-12'-apo-beta-caroten-12'-al + 2-cis,4-trans-xanthoxin. It catalyses the reaction 9'-cis-neoxanthin + O2 = (3S,5R,6R)-3,5-dihydroxy-6,7-didehydro-5,6-dihydro-12'-apo-beta-caroten-12'-al + 2-cis,4-trans-xanthoxin. Its function is as follows. Has a 11,12(11',12') 9-cis epoxycarotenoid cleavage activity. Catalyzes the first step of abscisic-acid biosynthesis from carotenoids. The chain is 9-cis-epoxycarotenoid dioxygenase NCED5, chloroplastic from Oryza sativa subsp. japonica (Rice).